The primary structure comprises 451 residues: Trigger factor (451 aa).

In terms of domain architecture, PPIase FKBP-type spans 170–256 (DHIATIDYCE…LTALKYKDLP (87 aa)).

Belongs to the FKBP-type PPIase family. Tig subfamily.

It localises to the cytoplasm. The catalysed reaction is [protein]-peptidylproline (omega=180) = [protein]-peptidylproline (omega=0). Functionally, involved in protein export. Acts as a chaperone by maintaining the newly synthesized protein in an open conformation. Functions as a peptidyl-prolyl cis-trans isomerase. The protein is Trigger factor of Treponema denticola (strain ATCC 35405 / DSM 14222 / CIP 103919 / JCM 8153 / KCTC 15104).